We begin with the raw amino-acid sequence, 346 residues long: Ribosomal RNA small subunit methyltransferase H (346 aa).

S-adenosyl-L-methionine-binding positions include 53 to 55 (GGY), Asp70, Phe97, Asp114, and Gln121.

The protein belongs to the methyltransferase superfamily. RsmH family.

The protein localises to the cytoplasm. It catalyses the reaction cytidine(1402) in 16S rRNA + S-adenosyl-L-methionine = N(4)-methylcytidine(1402) in 16S rRNA + S-adenosyl-L-homocysteine + H(+). Specifically methylates the N4 position of cytidine in position 1402 (C1402) of 16S rRNA. This Bartonella henselae (strain ATCC 49882 / DSM 28221 / CCUG 30454 / Houston 1) (Rochalimaea henselae) protein is Ribosomal RNA small subunit methyltransferase H.